A 1170-amino-acid chain; its full sequence is Thrombospondin-1 (1170 aa).

An N-terminal signal peptide occupies residues 1–18 (MGLAWGLGVLLLLHACGS). Positions 47–95 (RLVKGPDPSSPAFRIEDANLIPPVPDKKFQDLVDAVRAEKGFLLLASLR) are heparin-binding. Positions 65–270 (NLIPPVPDKK…HKTKDLQAIC (206 aa)) constitute a Laminin G-like domain. C171 and C232 are joined by a disulfide. N248 and N360 each carry an N-linked (GlcNAc...) asparagine glycan. Positions 316-373 (PLCYHNGVQYRTGDEWTVDSCTECRCQNSVTICKKVSCPIMPCSNATVPDGECCPRCW) constitute a VWFC domain. 3 consecutive TSP type-1 domains span residues 379-429 (DDGW…QECD), 435-490 (DGGW…DSCP), and 492-547 (NGGW…QDCP). 27 disulfides stabilise this stretch: C391-C423, C395-C428, C406-C413, C447-C484, C451-C489, C462-C474, C504-C541, C508-C546, C519-C531, C551-C562, C556-C572, C575-C586, C592-C608, C599-C617, C620-C644, C650-C663, C657-C676, C678-C689, C705-C713, C718-C738, C754-C774, C777-C797, C813-C833, C836-C856, C874-C894, C910-C930, and C946-C1167. Residues 547 to 587 (PIDGCLSNPCFAGVQCTSYPDGSWKCGACPPGYSGDGVECK) enclose the EGF-like 1 domain. The O-linked (Xyl) serine glycan is linked to S553. The EGF-like 2 domain occupies 646–690 (PRNPCTDGTHDCNKNAKCNYLGHYSDPMYRCECKPGYAGNGIICG). 8 TSP type-3 repeats span residues 691 to 726 (EDTD…NSGQ), 727 to 762 (EDYD…NPAQ), 763 to 785 (YDYD…NPDQ), 786 to 821 (ADTD…NVDQ), 822 to 844 (KDTD…NPDQ), 845 to 882 (LDSD…NANQ), 883 to 918 (ADHD…NPDQ), and 919 to 954 (KDSD…DISE). A glycan (N-linked (GlcNAc...) asparagine) is linked at N708. The interval 839–944 (EHNPDQLDSD…DQDKVPDIDD (106 aa)) is disordered. 3 stretches are compositionally biased toward basic and acidic residues: residues 840 to 854 (HNPD…RIGD), 883 to 894 (ADHDKDGKGDAC), and 917 to 941 (DQKD…KVPD). The short motif at 926-928 (RGD) is the Cell attachment site element. A TSP C-terminal domain is found at 958–1170 (RRFQMIPLDP…SDLKYECRDS (213 aa)). N1067 and N1085 each carry an N-linked (GlcNAc...) asparagine glycan.

Belongs to the thrombospondin family. In terms of assembly, homotrimer; disulfide-linked. Can bind to fibrinogen, fibronectin, laminin, type V collagen and integrins alpha-V/beta-1, alpha-V/beta-3 and alpha-IIb/beta-3. Binds heparin. Interacts (via the C-terminal domain) with CD47. Interacts (via the TSP type I repeats) with CD36; the interaction conveys an antiangiogenic effect. Interacts (via the TSP type I repeats) with HRG; the interaction blocks the antiangiogenic effect of THBS1 with CD36. Interacts with ATF6 (via lumenal domain). Interacts with FN1; this interaction is enhanced by TNFAIP6, which may act as a bridging molecule between FN1 and THBS1. Interacts with SIRPA; the interaction stimulates phosphorylation of SIRPA. In terms of tissue distribution, odontoblasts.

It is found in the secreted. It localises to the cell surface. The protein localises to the extracellular space. The protein resides in the extracellular matrix. Its subcellular location is the endoplasmic reticulum. It is found in the sarcoplasmic reticulum. Functionally, adhesive glycoprotein that mediates cell-to-cell and cell-to-matrix interactions. Multifunctional, involved in inflammation, angiogenesis, wound healing, reactive oxygen species (ROS) signaling, nitrous oxide (NO) signaling, apoptosis, senescence, aging, cellular self-renewal, stemness, and cardiovascular and metabolic homeostasis. Negatively modulates dendritic cell activation and cytokine release, as part of an autocrine feedback loop, contributing to the resolution of inflammation and immune homeostasis. Ligand for receptor CD47. Modulates nitrous oxide (NO) signaling via CD47, hence playing a role as a pressor agent, supporting blood pressure. Plays a role in endothelial cell senescence, acting via CD47, by increasing the abundance and activation of NADPH oxidase NOX1, and so generating excess ROS. Inhibits stem cell self-renewal, acting via CD47 signaling, probably by regulation of the stem cell transcription factors POU5F1/OCT4, SOX2, MYC/c-Myc and KLF4. Negatively modulates wound healing, acting via CD47. Ligand for receptor CD36. Involved in inducing apoptosis in podocytes in response to elevated free fatty acids, acting via CD36. Plays a role in suppressing angiogenesis, acting, depending on context, via CD36 or CD47. Promotes cellular senescence in a TP53-CDKN1A-RB1 signaling-dependent manner. Ligand for immunoglobulin-like cell surface receptor SIRPA. Involved in ROS signaling in non-phagocytic cells, stimulating NADPH oxidase-derived ROS production, acting via interaction with SIRPA. Plays a role in metabolic dysfunction in diet-induced obesity, perhaps acting by exacerbating adipose inflammatory activity; its effects may be mediated, at least in part, through enhanced adipocyte proliferation. Plays a role in ER stress response, via its interaction with the activating transcription factor 6 alpha (ATF6) which produces adaptive ER stress response factors. May be involved in age-related conditions, including metabolic dysregulation, during normal aging. The chain is Thrombospondin-1 (THBS1) from Bos taurus (Bovine).